The following is a 972-amino-acid chain: 116 kDa U5 small nuclear ribonucleoprotein component (972 aa).

At methionine 1 the chain carries N-acetylmethionine. The segment at methionine 1–glycine 54 is disordered. Composition is skewed to acidic residues over residues leucine 17–leucine 26 and aspartate 34–histidine 48. Phosphoserine is present on serine 19. Lysine 64 participates in a covalent cross-link: Glycyl lysine isopeptide (Lys-Gly) (interchain with G-Cter in SUMO1); alternate. A Glycyl lysine isopeptide (Lys-Gly) (interchain with G-Cter in SUMO2); alternate cross-link involves residue lysine 64. Phosphothreonine is present on threonine 86. The 283-residue stretch at glutamate 127–lysine 409 folds into the tr-type G domain. Residues glycine 136–threonine 143, aspartate 204–histidine 208, and asparagine 258–aspartate 261 contribute to the GTP site.

This sequence belongs to the TRAFAC class translation factor GTPase superfamily. Classic translation factor GTPase family. EF-G/EF-2 subfamily. As to quaternary structure, component of the U5 snRNP and the U4/U6-U5 tri-snRNP complex, a building block of the spliceosome. The U4/U6-U5 tri-snRNP complex is composed of the U4, U6 and U5 snRNAs and at least PRPF3, PRPF4, PRPF6, PRPF8, PRPF31, SNRNP200, TXNL4A, SNRNP40, DDX23, CD2BP2, PPIH, SNU13, EFTUD2, SART1 and USP39. Component of the pre-catalytic, catalytic and post-catalytic spliceosome complexes. Component of the minor spliceosome, which splices U12-type introns. Within this complex, interacts with CRIPT. Interacts with ERBB4 and PRPF8. Interacts with PIH1D1. Interacts with RPAP3 and URI1 in a ZNHIT2-dependent manner. Interacts with NRDE2. Interacts with FAM50A. Interacts with UBL5.

The protein localises to the nucleus. In terms of biological role, required for pre-mRNA splicing as component of the spliceosome, including pre-catalytic, catalytic and post-catalytic spliceosomal complexes. Component of the U5 snRNP and the U4/U6-U5 tri-snRNP complex, a building block of the spliceosome. As a component of the minor spliceosome, involved in the splicing of U12-type introns in pre-mRNAs. The polypeptide is 116 kDa U5 small nuclear ribonucleoprotein component (EFTUD2) (Homo sapiens (Human)).